Here is a 176-residue protein sequence, read N- to C-terminus: Ribosome maturation factor RimM (176 aa).

The 80-residue stretch at 93–172 (KDEFFQFDII…EILVKGARDI (80 aa)) folds into the PRC barrel domain.

It belongs to the RimM family. Binds ribosomal protein uS19.

It is found in the cytoplasm. Functionally, an accessory protein needed during the final step in the assembly of 30S ribosomal subunit, possibly for assembly of the head region. Essential for efficient processing of 16S rRNA. May be needed both before and after RbfA during the maturation of 16S rRNA. It has affinity for free ribosomal 30S subunits but not for 70S ribosomes. The chain is Ribosome maturation factor RimM from Campylobacter concisus (strain 13826).